We begin with the raw amino-acid sequence, 155 residues long: 1,4-dihydroxy-2-naphthoyl-CoA hydrolase (155 aa).

Aspartate 27 is an active-site residue.

Belongs to the 4-hydroxybenzoyl-CoA thioesterase family. DHNA-CoA hydrolase subfamily.

It catalyses the reaction 1,4-dihydroxy-2-naphthoyl-CoA + H2O = 1,4-dihydroxy-2-naphthoate + CoA + H(+). Its pathway is cofactor biosynthesis; phylloquinone biosynthesis. It participates in quinol/quinone metabolism; 1,4-dihydroxy-2-naphthoate biosynthesis; 1,4-dihydroxy-2-naphthoate from chorismate: step 7/7. Catalyzes the hydrolysis of 1,4-dihydroxy-2-naphthoyl-CoA (DHNA-CoA) to 1,4-dihydroxy-2-naphthoate (DHNA), a reaction involved in phylloquinone (vitamin K1) biosynthesis. In Prochlorococcus marinus (strain NATL2A), this protein is 1,4-dihydroxy-2-naphthoyl-CoA hydrolase.